The sequence spans 76 residues: Putative membrane protein insertion efficiency factor (76 aa).

Belongs to the UPF0161 family.

Its subcellular location is the cell inner membrane. Functionally, could be involved in insertion of integral membrane proteins into the membrane. This is Putative membrane protein insertion efficiency factor from Paraburkholderia phytofirmans (strain DSM 17436 / LMG 22146 / PsJN) (Burkholderia phytofirmans).